A 163-amino-acid polypeptide reads, in one-letter code: uncharacterized protein (163 aa).

Disordered stretches follow at residues 1–78 and 115–163; these read MHSL…NPHS and PKWL…LPCH.

This is an uncharacterized protein from Homo sapiens (Human).